The primary structure comprises 592 residues: 3-hydroxy-3-methylglutaryl-coenzyme A reductase 1 (592 aa).

Residues 1-45 form a disordered region; that stretch reads MDLRRRPPKPPVTNNNNSNGSFRSYQPRTSDDDHRRRATTIAPPP. Positions 12–28 are enriched in polar residues; that stretch reads VTNNNNSNGSFRSYQPR. N-linked (GlcNAc...) asparagine glycans are attached at residues asparagine 16 and asparagine 19. 2 consecutive transmembrane segments (helical) span residues 47–69 and 97–117; these read ASDALPLPLYLTNAVFFTLFFSV and AIIALIASFIYLLGFFGIDFV. The interval 118 to 171 is linker; sequence QSFISRASGDAWDLADTIDDDDHRLVTCSPPTPIVSVAKLPNPEPIVTESLPEE. The catalytic stretch occupies residues 172–592; sequence DEEIVKSVID…GATTTTTTTT (421 aa). Residue glutamate 265 is the Charge relay system of the active site. Asparagine 329 carries an N-linked (GlcNAc...) asparagine glycan. Active-site charge relay system residues include lysine 397 and aspartate 473. Histidine 571 acts as the Proton donor in catalysis. An N-linked (GlcNAc...) asparagine glycan is attached at asparagine 575. Position 577 is a phosphoserine (serine 577).

This sequence belongs to the HMG-CoA reductase family. In terms of assembly, interacts (via N-terminus) with B''ALPHA and B''BETA. Post-translationally, inactivated by phosphorylation at Ser-577 by KIN10 activated form. Probably also phosphorylated at additional sites. In terms of tissue distribution, found in all tissues. Isoform Short is expressed at low levels specifically in flowers. Expressed in both the tapetum and microspores.

The protein resides in the endoplasmic reticulum membrane. The catalysed reaction is (R)-mevalonate + 2 NADP(+) + CoA = (3S)-3-hydroxy-3-methylglutaryl-CoA + 2 NADPH + 2 H(+). It functions in the pathway metabolic intermediate biosynthesis; (R)-mevalonate biosynthesis; (R)-mevalonate from acetyl-CoA: step 3/3. Its activity is regulated as follows. Regulated at the post-translational level in response to alterations of sphingolipid and sterol biosynthetic pathways. Negatively regulated by a PP2A-dependent dephosphorylation occurring at a site different than Ser-577. Completely inhibited by mevinolin (IC(50) = 12.5 nM). Reversibly inactivated by phosphorylation at Ser-577 by spinach or Brassica oleracea HMGR kinases in a cell-free system. Down-regulated by KIN10 through its phosphorylation at Ser-577. Catalyzes the synthesis of mevalonate, the specific precursor of all isoprenoid compounds present in plants. The chain is 3-hydroxy-3-methylglutaryl-coenzyme A reductase 1 from Arabidopsis thaliana (Mouse-ear cress).